Consider the following 2000-residue polypeptide: Sodium channel protein type 3 subunit alpha (2000 aa).

Residues 1-128 (MAQALLVPPG…KIAIKILVHS (128 aa)) lie on the Cytoplasmic side of the membrane. The interval 28-60 (RAAEEKAKKPKKEQDNDDENKPKPNSDLEAGKN) is disordered. Residues 46–57 (ENKPKPNSDLEA) show a composition bias toward basic and acidic residues. The I repeat unit spans residues 110-455 (ILTPLNPVRK…QQMLEQLKKQ (346 aa)). A helical membrane pass occupies residues 129–146 (LFSMLIMCTILTNCVFMT). At 147 to 152 (LSNPPD) the chain is on the extracellular side. A helical membrane pass occupies residues 153–174 (WTKNVEYTFTGIYTFESLIKIL). The Cytoplasmic segment spans residues 175–188 (ARGFCLEDFTFLRD). Residues 189-206 (PWNWLDFSVIVMAYVTEF) traverse the membrane as a helical segment. The Extracellular segment spans residues 207 to 213 (VSLGNVS). An N-linked (GlcNAc...) asparagine glycan is attached at N211. The helical transmembrane segment at 214 to 235 (ALRTFRVLRALKTISVIPGLKT) threads the bilayer. Topologically, residues 236–249 (IVGALIQSVKKLSD) are cytoplasmic. Residues 250–269 (VMILTVFCLSVFALIGLQLF) form a helical membrane-spanning segment. Residues 270–369 (MGNLRNKCLQ…NYGYTSFDTF (100 aa)) lie on the Extracellular side of the membrane. N290, N296, N302, N307, and N339 each carry an N-linked (GlcNAc...) asparagine glycan. Positions 370–386 (SWAFLSLFRLMTQDYWE) form an intramembrane region, pore-forming. Topologically, residues 387–397 (NLYQLTLRAAG) are extracellular. The helical transmembrane segment at 398–424 (KTYMIFFVLVIFLGSFYLVNLILAVVA) threads the bilayer. The Cytoplasmic segment spans residues 425–761 (MAYEEQNQAT…LVNLIVMDPF (337 aa)). S484, S485, and S486 each carry phosphoserine. Disordered regions lie at residues 493 to 528 (SKSA…KSES), 587 to 631 (VGSE…ASMS), and 662 to 681 (ALTS…ETEV). Positions 500–509 (RNRRKKRRQR) are enriched in basic residues. 2 stretches are compositionally biased toward basic and acidic residues: residues 510-528 (EHLE…KSES) and 596-610 (DEHS…RRDS). Residues 662 to 678 (ALTSPTGQLPPEGTTTE) show a composition bias toward polar residues. Residues 742-1014 (CCDAWLKVKH…QIAVGRMQKG (273 aa)) form an II repeat. The chain crosses the membrane as a helical span at residues 762–779 (VDLAITICIVLNTLFMAM). Over 780 to 787 (EHYPMTEQ) the chain is Extracellular. The chain crosses the membrane as a helical span at residues 788–812 (FSSVLTVGNLVFTGIFTAEMVLKII). Over 813-822 (AMDPYYYFQE) the chain is Cytoplasmic. Residues 823 to 842 (GWNIFDGIIVSLSLMELGLS) form a helical membrane-spanning segment. Residues 843–846 (NVEG) are Extracellular-facing. Residues 847-865 (LSVLRSFRLLRVFKLAKSW) traverse the membrane as a helical segment. Residues 866-883 (PTLNMLIKIIGNSVGALG) lie on the Cytoplasmic side of the membrane. Residues 884-904 (NLTLVLAIIVFIFAVVGMQLF) traverse the membrane as a helical segment. Residues 905–929 (GKSYKECVCKINDDCTLPRWHMNDF) are Extracellular-facing. The cysteines at positions 913 and 919 are disulfide-linked. The segment at residues 930-945 (FHSFLIVFRVLCGEWI) is an intramembrane region (pore-forming). Residues 946–956 (ETMWDCMEVAG) lie on the Extracellular side of the membrane. C951 and C960 are oxidised to a cystine. A helical transmembrane segment spans residues 957 to 983 (QTMCLIVFMLVMVIGNLVVLNLFLALL). Residues 984 to 1205 (LSSFSSDNLA…RKTCYSIVEH (222 aa)) are Cytoplasmic-facing. Residues 1118-1162 (EEFSSESELEESKEKLNATSSSEGSTVDVVLPREGEQAETEPEED) are disordered. One copy of the III repeat lies at 1188–1499 (KGKIWWNLRK…KKYYNAMKKL (312 aa)). A helical transmembrane segment spans residues 1206 to 1226 (NWFETFIVFMILLSSGALAFE). Residues 1227–1238 (DIYIEQRKTIKT) are Extracellular-facing. A helical transmembrane segment spans residues 1239–1260 (MLEYADKVFTYIFILEMLLKWV). Residues 1261 to 1266 (AYGFQT) lie on the Cytoplasmic side of the membrane. The helical transmembrane segment at 1267 to 1292 (YFTNAWCWLDFLIVDVSLVSLVANAL) threads the bilayer. Over 1293–1301 (GYSELGAIK) the chain is Extracellular. Residues 1302-1320 (SLRTLRALRPLRALSRFEG) traverse the membrane as a helical segment. Residues 1321-1333 (MRVVVNALVGAIP) are Cytoplasmic-facing. A helical membrane pass occupies residues 1334–1356 (SIMNVLLVCLIFWLIFSIMGVNL). Residues 1357–1402 (FAGKFYHCVNMTTGNMFDISDVNNLSDCQALGKQARWKNVKVNFDN) lie on the Extracellular side of the membrane. C1364 and C1384 are disulfide-bonded. Residues N1366 and N1380 are each glycosylated (N-linked (GlcNAc...) asparagine). Residues 1403–1419 (VGAGYLALLQVATFKGW) constitute an intramembrane region (pore-forming). The Extracellular portion of the chain corresponds to 1420–1442 (MDIMYAAVDSRDVKLQPVYEENL). Residues 1443 to 1468 (YMYLYFVIFIIFGSFFTLNLFIGVII) traverse the membrane as a helical segment. Over 1469–1526 (DNFNQQKKKFGGQDIFMTEEQKKYYNAMKKLGSKKPQKPIPRPANKFQGMVFDFVTRQ) the chain is Cytoplasmic. S1501 is subject to Phosphoserine; by PKC. One copy of the IV repeat lies at 1508–1806 (IPRPANKFQG…WEKFDPDATQ (299 aa)). The chain crosses the membrane as a helical span at residues 1527–1545 (VFDISIMILICLNMVTMMV). The Extracellular portion of the chain corresponds to 1546-1553 (ETDDQGKY). The chain crosses the membrane as a helical span at residues 1554–1577 (MTLVLSRINLVFIVLFTGEFVLKL). Topologically, residues 1578–1587 (VSLRHYYFTI) are cytoplasmic. The chain crosses the membrane as a helical span at residues 1588–1605 (GWNIFDFVVVILSIVGMF). Residues 1606-1617 (LAEMIEKYFVSP) are Extracellular-facing. The helical transmembrane segment at 1618–1640 (TLFRVIRLARIGRILRLIKGAKG) threads the bilayer. Residues 1641-1653 (IRTLLFALMMSLP) are Cytoplasmic-facing. Residues 1654-1677 (ALFNIGLLLFLVMFIYAIFGMSNF) traverse the membrane as a helical segment. Residues 1678–1699 (AYVKKEAGIDDMFNFETFGNSM) lie on the Extracellular side of the membrane. Positions 1700–1712 (ICLFQITTSAGWD) form an intramembrane region, pore-forming. Residues 1713–1744 (GLLAPILNSAPPDCDPDTIHPGSSVKGDCGNP) are Extracellular-facing. The chain crosses the membrane as a helical span at residues 1745 to 1770 (SVGIFFFVSYIIISFLVVVNMYIAVI). The Cytoplasmic portion of the chain corresponds to 1771 to 2000 (LENFSVATEE…KGKEVRENQK (230 aa)). The IQ domain occupies 1900-1929 (EEVSAAIIQRNFRCYLLKQRLKNISSNYNK). The segment at 1949–2000 (LNGNSTPEKTDGSSSTTSPPSYDSVTKPDKEKFEKDKPEKESKGKEVRENQK) is disordered. The segment covering 1974–2000 (TKPDKEKFEKDKPEKESKGKEVRENQK) has biased composition (basic and acidic residues).

Belongs to the sodium channel (TC 1.A.1.10) family. Nav1.3/SCN3A subfamily. As to quaternary structure, heterooligomer of an alpha subunit, SCN3A, and 1 to 3 regulatory beta subunits including SCN1B and SCN2B; disulfide-linked with some beta subunits like SCN2B. Interacts with NEDD4L; could regulate expression of SCN3A at the plasma membrane through ubiquitination-regulated endocytosis. Interacts with the conotoxin GVIIJ. Post-translationally, may be ubiquitinated by NEDD4L; which would promote its endocytosis. Phosphorylation at Ser-1501 by PKC in a highly conserved cytoplasmic loop slows inactivation of the sodium channel and reduces peak sodium currents. In terms of tissue distribution, expressed in enterochromaffin cells in both colon and small bowel (at protein level).

It localises to the cell membrane. It is found in the basal cell membrane. The enzyme catalyses Na(+)(in) = Na(+)(out). Functionally, pore-forming subunit of Nav1.3, a voltage-gated sodium (Nav) channel that directly mediates the depolarizing phase of action potentials in excitable membranes. Navs, also called VGSCs (voltage-gated sodium channels) or VDSCs (voltage-dependent sodium channels), operate by switching between closed and open conformations depending on the voltage difference across the membrane. In the open conformation they allow Na(+) ions to selectively pass through the pore, along their electrochemical gradient. The influx of Na+ ions provokes membrane depolarization, initiating the propagation of electrical signals throughout cells and tissues. In some secretory cell types, it also participates in cell excitability through membrane depolarization and regulates cells responsiveness to stimuli triggering secretion. For instance, it controls the release of serotonin/5-hydroxytryptamine by enterochromaffin cells and is required for both glucagon- and glucose-induced insulin secretion in pancreatic endocrine cells. This Homo sapiens (Human) protein is Sodium channel protein type 3 subunit alpha.